Here is a 233-residue protein sequence, read N- to C-terminus: Putative T-box protein 41 (233 aa).

A DNA-binding region (T-box) is located at residues 1-146; the sequence is MTVTRNGCRI…MNPHARHFLK (146 aa).

The protein resides in the nucleus. In Caenorhabditis elegans, this protein is Putative T-box protein 41 (tbx-41).